The following is a 273-amino-acid chain: tRNA pseudouridine synthase B (273 aa).

The active-site Nucleophile is aspartate 38.

This sequence belongs to the pseudouridine synthase TruB family. Type 1 subfamily.

It catalyses the reaction uridine(55) in tRNA = pseudouridine(55) in tRNA. Its function is as follows. Responsible for synthesis of pseudouridine from uracil-55 in the psi GC loop of transfer RNAs. This Campylobacter concisus (strain 13826) protein is tRNA pseudouridine synthase B.